The primary structure comprises 387 residues: Eukaryotic translation initiation factor 3 subunit M (387 aa).

The PCI domain occupies 181–340; sequence RSSKVMIELL…RKVHISSTMH (160 aa).

The protein belongs to the eIF-3 subunit M family. As to quaternary structure, component of the eukaryotic translation initiation factor 3 (eIF-3) complex. The eIF-3 complex interacts with pix.

The protein localises to the cytoplasm. It localises to the golgi apparatus. Functionally, component of the eukaryotic translation initiation factor 3 (eIF-3) complex, which is involved in protein synthesis of a specialized repertoire of mRNAs and, together with other initiation factors, stimulates binding of mRNA and methionyl-tRNAi to the 40S ribosome. The eIF-3 complex specifically targets and initiates translation of a subset of mRNAs involved in cell proliferation. The sequence is that of Eukaryotic translation initiation factor 3 subunit M from Drosophila willistoni (Fruit fly).